Here is a 709-residue protein sequence, read N- to C-terminus: MGCLWGLALPLFFFCWEVGVSGSSAGPSTRRADTAMTTDDTEVPAMTLAPGHAALETQTLSAETSSRASTPAGPIPEAETRGAKRISPARETRSFTKTSPNFMVLIATSVETSAASGSPEGAGMTTVQTITGSDPREAIFDTLCTDDSSEEAKTLTMDILTLAHTSTEAKGLSSESSASSDSPHPVITPSRASESSASSDGPHPVITPSRASESSASSDGPHPVITPSRASESSASSDGPHPVITPSRASESSASSDGPHPVITPSRASESSASSDGPHPVITPSRASESSASSDGPHPVITPSRASESSASSDGPHPVITPSRASESSASSDGPHPVITPSRASESSASSDGLHPVITPSRASESSASSDGPHPVITPSRASESSASSDGPHPVITPSWSPGSDVTLLAEALVTVTNIEVINCSITEIETTTSSIPGASDTDLIPTEGVKASSTSDPPALPDSTEAKPHITEVTASAETLSTAGTTESAAPDATVGTPLPTNSATEREVTAPGATTLSGALVTVSRNPLEETSALSVETPSYVKVSGAAPVSIEAGSAVGKTTSFAGSSASSYSPSEAALKNFTPSETPTMDIATKGPFPTSRDPLPSVPPTTTNSSRGTNSTLAKITTSAKTTMKPPTATPTTARTRPTTDVSAGENGGFLLLRLSVASPEDLTDPRVAERLMQQLHRELHAHAPHFQVSLLRVRRG.

A signal peptide spans Met-1–Ala-25. Over residues Thr-57–Ser-69 the composition is skewed to polar residues. Disordered stretches follow at residues Thr-57–Thr-92 and Lys-170–Gly-403. Positions Ala-78–Thr-92 are enriched in basic and acidic residues. Low complexity-rich tracts occupy residues Ser-173 to Ser-182, Ser-190 to Ser-199, Ser-209 to Ser-218, Ser-228 to Ser-237, Ser-247 to Ser-256, Ser-266 to Ser-275, Ser-285 to Ser-294, Ser-304 to Ser-313, Ser-323 to Ser-332, Ser-342 to Ser-351, Ser-361 to Ser-370, and Ser-380 to Ser-389. A run of 11 repeats spans residues Ser-173–Ala-192, Ser-193–Ala-211, Ser-212–Ala-230, Ser-231–Ala-249, Ser-250–Ala-268, Ser-269–Ala-287, Ser-288–Ala-306, Ser-307–Ala-325, Ser-326–Ala-344, Ser-345–Ala-363, and Ser-364–Ala-382. The 12 X 20 AA approximate tandem repeats of S-S-E-S-S-A-S-S-D-S-P-H-P-V-I-T-P-S-R-A stretch occupies residues Ser-173–Trp-400. The stretch at Ser-383–Trp-400 is one 12; approximate repeat. Asn-423 is a glycosylation site (N-linked (GlcNAc...) asparagine). 2 disordered regions span residues Ser-434–Ala-515 and Asn-583–Gly-657. Residues Val-450–Ala-656 are involved in oligomerization. Residues Val-474–Ser-489 are compositionally biased toward polar residues. The segment covering Thr-613 to Thr-652 has biased composition (low complexity). N-linked (GlcNAc...) asparagine glycans are attached at residues Asn-616 and Asn-622. Residues Gly-657–Gly-709 form an interaction with MET region.

As to quaternary structure, interacts with MET; oligomerization increases affinity for MET. In terms of tissue distribution, highly expressed in kidney, moderately in placenta, lung, prostate, liver, and digestive system. In the kidney, localized in the proximal tubules but not in the glomerulus or distal tubules. Detected in most of the male urogenital tract epithelia, with the exception of epididymis.

The protein resides in the secreted. Its subcellular location is the apical cell membrane. It localises to the basolateral cell membrane. The protein localises to the cell projection. It is found in the microvillus membrane. May regulate MET signaling cascade. Seems to decrease hepatocyte growth factor (HGF)-induced transient MAPK activation. Blocks GRB2 recruitment to MET thus suppressing the GRB2-RAS pathway. Inhibits HGF-induced proliferation of MMP1 and MMP9 expression. The sequence is that of Mucin-20 (MUC20) from Homo sapiens (Human).